A 135-amino-acid polypeptide reads, in one-letter code: Basic phospholipase A2 10 (135 aa).

Cystine bridges form between Cys28-Cys87, Cys42-Cys134, Cys44-Cys60, Cys59-Cys115, Cys66-Cys108, Cys76-Cys101, and Cys94-Cys106. Ca(2+) is bound by residues Tyr43, Gly45, and Gly47. Residue His63 is part of the active site. Asp64 provides a ligand contact to Ca(2+). Asp109 is an active-site residue.

Belongs to the phospholipase A2 family. Group I subfamily. D49 sub-subfamily. It depends on Ca(2+) as a cofactor. As to expression, expressed by the venom gland.

Its subcellular location is the secreted. It carries out the reaction a 1,2-diacyl-sn-glycero-3-phosphocholine + H2O = a 1-acyl-sn-glycero-3-phosphocholine + a fatty acid + H(+). Functionally, snake venom phospholipase A2 (PLA2) that inhibits neuromuscular transmission by blocking acetylcholine release from the nerve termini. PLA2 catalyzes the calcium-dependent hydrolysis of the 2-acyl groups in 3-sn-phosphoglycerides. The protein is Basic phospholipase A2 10 of Bungarus fasciatus (Banded krait).